We begin with the raw amino-acid sequence, 605 residues long: Threonine--tRNA ligase (605 aa).

The segment at 195 to 497 (DHRKVGKELG…LIEEYAGDFP (303 aa)) is catalytic. Zn(2+) is bound by residues Cys294, His345, and His474.

This sequence belongs to the class-II aminoacyl-tRNA synthetase family. Homodimer. It depends on Zn(2+) as a cofactor.

It is found in the cytoplasm. The catalysed reaction is tRNA(Thr) + L-threonine + ATP = L-threonyl-tRNA(Thr) + AMP + diphosphate + H(+). Catalyzes the attachment of threonine to tRNA(Thr) in a two-step reaction: L-threonine is first activated by ATP to form Thr-AMP and then transferred to the acceptor end of tRNA(Thr). Also edits incorrectly charged L-seryl-tRNA(Thr). This Thermosynechococcus vestitus (strain NIES-2133 / IAM M-273 / BP-1) protein is Threonine--tRNA ligase.